A 302-amino-acid polypeptide reads, in one-letter code: Myb-related protein Hv33 (302 aa).

2 consecutive HTH myb-type domains span residues 11–63 and 64–118; these read QPKV…INYL and RPDL…KKKL. DNA-binding regions (H-T-H motif) lie at residues 39 to 63 and 91 to 114; these read WSSVPRLAALNRCGKSCRLRWINYL and WSQIASHLPGRTDNEIKNFWNSCI. The interval 137 to 158 is disordered; sequence ATAAAALPDAEEEDRKPLCPAV.

As to expression, germinating seed and apical meristem of shoot and root.

The protein localises to the nucleus. Its function is as follows. Possible transcription activator in response to an external signal. May be involved in the regulation of flavonoid biosynthesis. This is Myb-related protein Hv33 (MYB2) from Hordeum vulgare (Barley).